We begin with the raw amino-acid sequence, 634 residues long: 1-phosphatidylinositol 4,5-bisphosphate phosphodiesterase zeta-1 (634 aa).

The 36-residue stretch at cysteine 35–arginine 70 folds into the EF-hand domain. The 145-residue stretch at glutamine 155–lysine 299 folds into the PI-PLC X-box domain. Residues histidine 170 and histidine 215 contribute to the active site. Positions glycine 312 to aspartate 345 are disordered. The span at glutamate 321–glycine 334 shows a compositional bias: acidic residues. The region spanning leucine 376–arginine 492 is the PI-PLC Y-box domain. One can recognise a C2 domain in the interval arginine 492 to serine 615.

Interacts (via its C2 domain) with PtdIns(3)P and, to a lesser extent, PtdIns(5)P in vitro. The cofactor is Ca(2+).

Its subcellular location is the nucleus. It is found in the cytoplasm. The protein localises to the perinuclear region. It catalyses the reaction a 1,2-diacyl-sn-glycero-3-phospho-(1D-myo-inositol-4,5-bisphosphate) + H2O = 1D-myo-inositol 1,4,5-trisphosphate + a 1,2-diacyl-sn-glycerol + H(+). Its function is as follows. The production of the second messenger molecules diacylglycerol (DAG) and inositol 1,4,5-trisphosphate (IP3) is mediated by activated phosphatidylinositol-specific phospholipase C enzymes. In vitro, hydrolyzes PtdIns(4,5)P2 in a Ca(2+)-dependent manner. Triggers intracellular Ca(2+) oscillations in oocytes solely during M phase and is involved in inducing oocyte activation and initiating embryonic development up to the blastocyst stage. Is therefore a strong candidate for the egg-activating soluble sperm factor that is transferred from the sperm into the egg cytoplasm following gamete membrane fusion. May exert an inhibitory effect on phospholipase-C-coupled processes that depend on calcium ions and protein kinase C, including CFTR trafficking and function. This Bos taurus (Bovine) protein is 1-phosphatidylinositol 4,5-bisphosphate phosphodiesterase zeta-1.